The following is a 188-amino-acid chain: UPF0301 protein PsycPRwf_0144 (188 aa).

This sequence belongs to the UPF0301 (AlgH) family.

This chain is UPF0301 protein PsycPRwf_0144, found in Psychrobacter sp. (strain PRwf-1).